The sequence spans 289 residues: Fumagillin beta-trans-bergamotene synthase af520 (289 aa).

A run of 6 helical transmembrane segments spans residues 35-55 (AVALVLAAPCSFHLIIKGFLW), 95-115 (TLLYRVLFFLMWVAAVYTNTI), 142-162 (LIGAIGLGCYCWGTTIIFDGG), 165-185 (LHGLKAVAVLMIVGIFATTGH), 222-242 (AWTIGLIALWKPPAIVTLAYV), and 262-282 (YVSYCWYGFWLLGSNILPIFP).

This sequence belongs to the paxB family.

It localises to the membrane. It catalyses the reaction (2E,6E)-farnesyl diphosphate = (+)-exo-beta-bergamotene + diphosphate. It participates in secondary metabolite biosynthesis; terpenoid biosynthesis. Beta-trans-bergamotene synthase; part of the gene cluster that mediates the biosynthesis of fumagillin, a meroterpenoid that has numerous biological activities including irreversible inhibition of human type 2 methionine aminopeptidase (METAP2). Within the pathway, the membrane-bound fumagillin beta-trans-bergamotene synthase af520 converts farnesyl pyrophosphate (FPP) to beta-trans-bergamotene. The pathway begins with the conversion of FPP to beta-trans-bergamotene by af520. The multifunctional cytochrome P450 monooxygenase af510 then converts beta-trans-bergamotene into 5-keto-demethoxyfumagillol via several oxydation steps. 5-keto-demethoxyfumagillol is then subjected to successive C-6 hydroxylation and O-methylation by the dioxygenase af480 and O-methyltransferase af390-400, respectively, to yield 5-keto-fumagillol, which is then stereoselectively reduced by the keto-reductase af490 to 5R-hydroxy-seco-sesquiterpene. The next step is the polyketide transferase af380-catalyzed transfer of a dodecapentaenoyl group synthesized by the polyketide synthase af370 onto 5R-hydroxy-seco-sesquiterpene which leads to the production of prefumagillin. Finally, oxidative cleavage by the monooxygenase af470 converts prefumagillin to fumagillin. The chain is Fumagillin beta-trans-bergamotene synthase af520 from Aspergillus fumigatus (strain ATCC MYA-4609 / CBS 101355 / FGSC A1100 / Af293) (Neosartorya fumigata).